Here is a 137-residue protein sequence, read N- to C-terminus: MPRHNKKDSTSGASQRQLRVAETVRHAIADILAQGHVHDPVLEGHLITVPEVRMSADLKLATIYVMPLGGRDTTDVIDALDHNRKFLRGEIARRVNLKFAPDIRFRADERFDEAERIEKLLRTPAVQRDLAPDSDES.

The protein belongs to the RbfA family. As to quaternary structure, monomer. Binds 30S ribosomal subunits, but not 50S ribosomal subunits or 70S ribosomes.

It localises to the cytoplasm. One of several proteins that assist in the late maturation steps of the functional core of the 30S ribosomal subunit. Associates with free 30S ribosomal subunits (but not with 30S subunits that are part of 70S ribosomes or polysomes). Required for efficient processing of 16S rRNA. May interact with the 5'-terminal helix region of 16S rRNA. In Nitrobacter hamburgensis (strain DSM 10229 / NCIMB 13809 / X14), this protein is Ribosome-binding factor A.